A 220-amino-acid chain; its full sequence is Metalloproteinase inhibitor 2 (220 aa).

The first 26 residues, 1–26, serve as a signal peptide directing secretion; it reads MGAAARSLPLAFCLLLLGTLLPRADA. C27 contacts Zn(2+). The interval 27 to 30 is involved in metalloproteinase-binding; that stretch reads CSCS. 6 disulfide bridges follow: C27–C98, C29–C127, C39–C152, C154–C201, C159–C164, and C172–C193. An NTR domain is found at 27-152; the sequence is CSCSPVHPQQ…SLNHRYQMGC (126 aa).

It belongs to the protease inhibitor I35 (TIMP) family. As to quaternary structure, interacts (via the C-terminal) with MMP2 (via the C-terminal PEX domain); the interaction inhibits the MMP2 activity. The activity of TIMP2 is dependent on the presence of disulfide bonds.

Its subcellular location is the secreted. Complexes with metalloproteinases (such as collagenases) and irreversibly inactivates them by binding to their catalytic zinc cofactor. The sequence is that of Metalloproteinase inhibitor 2 (TIMP2) from Bos taurus (Bovine).